Reading from the N-terminus, the 110-residue chain is Keratin-associated protein 6-3 (110 aa).

It belongs to the KRTAP type 6 family. As to quaternary structure, interacts with hair keratins.

Its function is as follows. In the hair cortex, hair keratin intermediate filaments are embedded in an interfilamentous matrix, consisting of hair keratin-associated proteins (KRTAP), which are essential for the formation of a rigid and resistant hair shaft through their extensive disulfide bond cross-linking with abundant cysteine residues of hair keratins. The matrix proteins include the high-sulfur and high-glycine-tyrosine keratins. The polypeptide is Keratin-associated protein 6-3 (Homo sapiens (Human)).